A 557-amino-acid chain; its full sequence is Chaperonin GroEL 1 (557 aa).

ATP is bound by residues 29–32, Lys-50, 86–90, Gly-416, and Asp-495; these read TLGP and DGTTT.

This sequence belongs to the chaperonin (HSP60) family. Forms a cylinder of 14 subunits composed of two heptameric rings stacked back-to-back. Interacts with the co-chaperonin GroES.

It is found in the cytoplasm. It carries out the reaction ATP + H2O + a folded polypeptide = ADP + phosphate + an unfolded polypeptide.. In terms of biological role, together with its co-chaperonin GroES, plays an essential role in assisting protein folding. The GroEL-GroES system forms a nano-cage that allows encapsulation of the non-native substrate proteins and provides a physical environment optimized to promote and accelerate protein folding. The chain is Chaperonin GroEL 1 from Protochlamydia amoebophila (strain UWE25).